The chain runs to 66 residues: MPKQKTHRASAKRFKRTGSGGLKRFRAYTSHRFHGKTKKQRRHLRKASMVHSGDFKRIKSMLTRLK.

Residues 1–16 (MPKQKTHRASAKRFKR) show a composition bias toward basic residues. The disordered stretch occupies residues 1–21 (MPKQKTHRASAKRFKRTGSGG).

This sequence belongs to the bacterial ribosomal protein bL35 family.

This Streptococcus mutans serotype c (strain ATCC 700610 / UA159) protein is Large ribosomal subunit protein bL35.